We begin with the raw amino-acid sequence, 447 residues long: Tubulin beta chain (447 aa).

8 residues coordinate GTP: glutamine 11, glutamate 69, serine 138, glycine 142, threonine 143, glycine 144, asparagine 204, and asparagine 226. Residue glutamate 69 coordinates Mg(2+). Residues 425-447 (YQDASISEGEEEYEEEVPIEGEE) form a disordered region. The span at 432–447 (EGEEEYEEEVPIEGEE) shows a compositional bias: acidic residues.

The protein belongs to the tubulin family. As to quaternary structure, dimer of alpha and beta chains. A typical microtubule is a hollow water-filled tube with an outer diameter of 25 nm and an inner diameter of 15 nM. Alpha-beta heterodimers associate head-to-tail to form protofilaments running lengthwise along the microtubule wall with the beta-tubulin subunit facing the microtubule plus end conferring a structural polarity. Microtubules usually have 13 protofilaments but different protofilament numbers can be found in some organisms and specialized cells. Requires Mg(2+) as cofactor.

The protein localises to the cytoplasm. The protein resides in the cytoskeleton. Its function is as follows. Tubulin is the major constituent of microtubules, a cylinder consisting of laterally associated linear protofilaments composed of alpha- and beta-tubulin heterodimers. Microtubules grow by the addition of GTP-tubulin dimers to the microtubule end, where a stabilizing cap forms. Below the cap, tubulin dimers are in GDP-bound state, owing to GTPase activity of alpha-tubulin. In Botryotinia fuckeliana (Noble rot fungus), this protein is Tubulin beta chain (tubA).